The chain runs to 278 residues: Probable endonuclease 4 (278 aa).

Residues His70, His108, Glu143, Asp176, His179, His210, Asp223, His225, and Glu255 each coordinate Zn(2+).

It belongs to the AP endonuclease 2 family. Zn(2+) serves as cofactor.

The catalysed reaction is Endonucleolytic cleavage to 5'-phosphooligonucleotide end-products.. Endonuclease IV plays a role in DNA repair. It cleaves phosphodiester bonds at apurinic or apyrimidinic (AP) sites, generating a 3'-hydroxyl group and a 5'-terminal sugar phosphate. The polypeptide is Probable endonuclease 4 (Mycoplasmopsis agalactiae (strain NCTC 10123 / CIP 59.7 / PG2) (Mycoplasma agalactiae)).